A 74-amino-acid chain; its full sequence is High-potential iron-sulfur protein (74 aa).

4 residues coordinate [4Fe-4S] cluster: cysteine 36, cysteine 39, cysteine 53, and cysteine 67.

It belongs to the high-potential iron-sulfur protein (HiPIP) family. Homodimer.

Its function is as follows. Specific class of high-redox-potential 4Fe-4S ferredoxins. Functions in anaerobic electron transport in most purple and in some other photosynthetic bacteria and in at least one genus (Paracoccus) of halophilic, denitrifying bacteria. The polypeptide is High-potential iron-sulfur protein (hip) (Rubrivivax gelatinosus (Rhodocyclus gelatinosus)).